A 353-amino-acid chain; its full sequence is Endophilin-A1 (353 aa).

The membrane-binding amphipathic helix stretch occupies residues 1–21 (MSVAGLKKQFHKATQKVSEKV). Positions 1 to 27 (MSVAGLKKQFHKATQKVSEKVGGAEGT) are disordered. A binds and tubulates liposomes region spans residues 1 to 125 (MSVAGLKKQF…DVGEAMKELS (125 aa)). Residues 18–249 (SEKVGGAEGT…LEDRIKEASS (232 aa)) form the BAR domain. The interval 60–87 (PNPASRAKLSMINTMSKIRGQEKGPGYP) is required for dimerization upon membrane association. Residues 181 to 201 (EELRQALEKFDESKEIAESSM) are a coiled coil. Positions 243–257 (RIKEASSQPKREYQP) are enriched in basic and acidic residues. The segment at 243 to 290 (RIKEASSQPKREYQPKPRMSLDFTSGGDNTQHNGGISHATTPKPAGAH) is disordered. Residues 264-282 (DFTSGGDNTQHNGGISHAT) show a composition bias toward polar residues. The region spanning 291 to 350 (MDQPCCRALYDFEPENEGELGFKEGDIITLTNQIDENWYEGMLHGQSGFFPINYVDILVP) is the SH3 domain.

Belongs to the endophilin family. In terms of assembly, monomer; in cytoplasm. Homodimer; when associated with membranes. Associates with MAP4K3. This interaction appears to regulate MAP4K3-mediated JNK activation. Interacts with SYNJ1 and DNM1. As to expression, highly expressed in brain.

Its subcellular location is the cytoplasm. It localises to the membrane. The protein resides in the early endosome. The protein localises to the presynapse. Its function is as follows. Implicated in synaptic vesicle endocytosis. May recruit other proteins to membranes with high curvature. In Gallus gallus (Chicken), this protein is Endophilin-A1.